The primary structure comprises 848 residues: DNA mismatch repair protein MutS (848 aa).

Residue 605-612 (GPNMAGKS) coordinates ATP.

Belongs to the DNA mismatch repair MutS family.

Its function is as follows. This protein is involved in the repair of mismatches in DNA. It is possible that it carries out the mismatch recognition step. This protein has a weak ATPase activity. This is DNA mismatch repair protein MutS from Leptospira interrogans serogroup Icterohaemorrhagiae serovar Lai (strain 56601).